The primary structure comprises 316 residues: Biotin synthase (316 aa).

The Radical SAM core domain occupies 39-263; that stretch reads NAIQCSTLLS…LFPKAYVRLS (225 aa). The [4Fe-4S] cluster site is built by Cys54, Cys58, and Cys61. [2Fe-2S] cluster-binding residues include Cys98, Cys129, Cys189, and Arg261.

Belongs to the radical SAM superfamily. Biotin synthase family. In terms of assembly, homodimer. [4Fe-4S] cluster is required as a cofactor. [2Fe-2S] cluster serves as cofactor.

The catalysed reaction is (4R,5S)-dethiobiotin + (sulfur carrier)-SH + 2 reduced [2Fe-2S]-[ferredoxin] + 2 S-adenosyl-L-methionine = (sulfur carrier)-H + biotin + 2 5'-deoxyadenosine + 2 L-methionine + 2 oxidized [2Fe-2S]-[ferredoxin]. The protein operates within cofactor biosynthesis; biotin biosynthesis; biotin from 7,8-diaminononanoate: step 2/2. Functionally, catalyzes the conversion of dethiobiotin (DTB) to biotin by the insertion of a sulfur atom into dethiobiotin via a radical-based mechanism. This chain is Biotin synthase, found in Acidithiobacillus ferrooxidans (strain ATCC 23270 / DSM 14882 / CIP 104768 / NCIMB 8455) (Ferrobacillus ferrooxidans (strain ATCC 23270)).